The following is a 196-amino-acid chain: GTP cyclohydrolase-2 (196 aa).

49–53 is a binding site for GTP; the sequence is RVHSE. Positions 54, 65, and 67 each coordinate Zn(2+). GTP contacts are provided by residues Gln70, 92–94, and Thr114; that span reads EGR. The active-site Proton acceptor is Asp126. The active-site Nucleophile is the Arg128. Positions 149 and 154 each coordinate GTP.

This sequence belongs to the GTP cyclohydrolase II family. Homodimer. Requires Zn(2+) as cofactor.

It catalyses the reaction GTP + 4 H2O = 2,5-diamino-6-hydroxy-4-(5-phosphoribosylamino)-pyrimidine + formate + 2 phosphate + 3 H(+). It functions in the pathway cofactor biosynthesis; riboflavin biosynthesis; 5-amino-6-(D-ribitylamino)uracil from GTP: step 1/4. Functionally, catalyzes the conversion of GTP to 2,5-diamino-6-ribosylamino-4(3H)-pyrimidinone 5'-phosphate (DARP), formate and pyrophosphate. The chain is GTP cyclohydrolase-2 from Escherichia coli O127:H6 (strain E2348/69 / EPEC).